A 445-amino-acid polypeptide reads, in one-letter code: Phosphoglucosamine mutase (445 aa).

S102 acts as the Phosphoserine intermediate in catalysis. 4 residues coordinate Mg(2+): S102, D241, D243, and D245. S102 carries the post-translational modification Phosphoserine.

It belongs to the phosphohexose mutase family. It depends on Mg(2+) as a cofactor. Post-translationally, activated by phosphorylation.

The enzyme catalyses alpha-D-glucosamine 1-phosphate = D-glucosamine 6-phosphate. In terms of biological role, catalyzes the conversion of glucosamine-6-phosphate to glucosamine-1-phosphate. This chain is Phosphoglucosamine mutase, found in Rhodococcus opacus (strain B4).